The following is a 219-amino-acid chain: Probable GTP-binding protein EngB (219 aa).

In terms of domain architecture, EngB-type G spans 24–207 (VQPEIAFAGR…HALIESWVRP (184 aa)). GTP is bound by residues 32 to 39 (GRSNAGKS), 59 to 63 (GRTQH), 81 to 84 (DLPG), 148 to 151 (TKCD), and 186 to 188 (FSA). S39 and T61 together coordinate Mg(2+).

This sequence belongs to the TRAFAC class TrmE-Era-EngA-EngB-Septin-like GTPase superfamily. EngB GTPase family. Requires Mg(2+) as cofactor.

Its function is as follows. Necessary for normal cell division and for the maintenance of normal septation. The sequence is that of Probable GTP-binding protein EngB from Burkholderia multivorans (strain ATCC 17616 / 249).